Here is a 345-residue protein sequence, read N- to C-terminus: MIKLNNITKIFELPNKKLTALDNVSLNIEKGQICGVIGASGAGKSTLIRCVNLLEKPTSGSVIVDGVELTKLSDRELVLARRQIGMIFQHFNLLSSRTVFENVALPLELESESKAKIQEKITALLDLVGLSEKRDAYPSNLSGGQKQRVAIARALASDPKVLLCDEATSALDPATTQSILQLLKEINRTLGITILLITHEMEVVKQICDQVAVIDQGRLVEQGTVGEIFANPKTELAQEFIRSTFHISLPDEYLENLTDTPKHSKAYPIIKFEFTGRSVDAPLLSQASKKFGVELSILTSQIDYAGGVKFGYTIAEVEGDEDAITQTKVYLMENNVRVEVLGYVQ.

One can recognise an ABC transporter domain in the interval 2-241; that stretch reads IKLNNITKIF…PKTELAQEFI (240 aa). 38–45 serves as a coordination point for ATP; sequence GASGAGKS.

The protein belongs to the ABC transporter superfamily. Methionine importer (TC 3.A.1.24) family. The complex is composed of two ATP-binding proteins (MetN), two transmembrane proteins (MetI) and a solute-binding protein (MetQ).

The protein localises to the cell inner membrane. The catalysed reaction is L-methionine(out) + ATP + H2O = L-methionine(in) + ADP + phosphate + H(+). It carries out the reaction D-methionine(out) + ATP + H2O = D-methionine(in) + ADP + phosphate + H(+). Part of the ABC transporter complex MetNIQ involved in methionine import. Responsible for energy coupling to the transport system. This Haemophilus influenzae (strain 86-028NP) protein is Methionine import ATP-binding protein MetN.